Here is a 375-residue protein sequence, read N- to C-terminus: MFSVIKNDKHFNARVGFLNLPHGRVDIPCFMPVGTLGAMKGLKHAVLEKLECNLMLANTYHLYLRLGIKTVEKYVGLHNFTIWNKNFLTDSGGFRVFSFSDLRKIDLKGVHFKSHIDGSYHYFTSEGIFAMQEIFGSDIIMPLDICSSYGIDYNEANLYTNITTNWASSTFKSSKNRKEGYNGLLFLITQGNFFKDLRKRSINDILELDSPGIAIGGISVGEPREKYLEILEYSFLLIPKEKPRYVMGIGTPHYILNAIYYGIDIFDCFNPARITRHGSLLTDNGIMCIGRKEYKDDTSKVEKNCICTLCKRYSRGYLRHLIKSKELFGIVLASEHNIHYMFRLISKIRAAILNDDFLNFRTSYLKKYEEENFDE.

Aspartate 90 serves as the catalytic Proton acceptor. Residues 90–94 (DSGGF), aspartate 144, glutamine 190, and glycine 217 contribute to the substrate site. Positions 248 to 254 (GIGTPHY) are RNA binding. Aspartate 267 serves as the catalytic Nucleophile. The interval 272–276 (ARITR) is RNA binding; important for wobble base 34 recognition. Cysteine 305, cysteine 307, cysteine 310, and histidine 336 together coordinate Zn(2+).

Belongs to the queuine tRNA-ribosyltransferase family. In terms of assembly, homodimer. Within each dimer, one monomer is responsible for RNA recognition and catalysis, while the other monomer binds to the replacement base PreQ1. Zn(2+) is required as a cofactor.

The enzyme catalyses 7-aminomethyl-7-carbaguanine + guanosine(34) in tRNA = 7-aminomethyl-7-carbaguanosine(34) in tRNA + guanine. It participates in tRNA modification; tRNA-queuosine biosynthesis. Catalyzes the base-exchange of a guanine (G) residue with the queuine precursor 7-aminomethyl-7-deazaguanine (PreQ1) at position 34 (anticodon wobble position) in tRNAs with GU(N) anticodons (tRNA-Asp, -Asn, -His and -Tyr). Catalysis occurs through a double-displacement mechanism. The nucleophile active site attacks the C1' of nucleotide 34 to detach the guanine base from the RNA, forming a covalent enzyme-RNA intermediate. The proton acceptor active site deprotonates the incoming PreQ1, allowing a nucleophilic attack on the C1' of the ribose to form the product. After dissociation, two additional enzymatic reactions on the tRNA convert PreQ1 to queuine (Q), resulting in the hypermodified nucleoside queuosine (7-(((4,5-cis-dihydroxy-2-cyclopenten-1-yl)amino)methyl)-7-deazaguanosine). The protein is Queuine tRNA-ribosyltransferase of Borreliella burgdorferi (strain ATCC 35210 / DSM 4680 / CIP 102532 / B31) (Borrelia burgdorferi).